The primary structure comprises 160 residues: Cyclic di-GMP-binding protein Smlt4090 (160 aa).

3',3'-c-di-GMP is bound by residues K33, K132, R134, D135, and D160.

It belongs to the YajQ family.

Cyclic di-GMP effector that significantly contributes to virulence. Binds bis-(3',5')-cyclic diguanylate (cyclic di-GMP or c-di-GMP), an important bacterial second messenger that controls a wide range of cellular processes. This chain is Cyclic di-GMP-binding protein Smlt4090, found in Stenotrophomonas maltophilia (strain K279a).